A 1172-amino-acid chain; its full sequence is DNA-directed RNA polymerase subunit beta (1172 aa).

Belongs to the RNA polymerase beta chain family. As to quaternary structure, the RNAP catalytic core consists of 2 alpha, 1 beta, 1 beta' and 1 omega subunit. When a sigma factor is associated with the core the holoenzyme is formed, which can initiate transcription.

The catalysed reaction is RNA(n) + a ribonucleoside 5'-triphosphate = RNA(n+1) + diphosphate. DNA-dependent RNA polymerase catalyzes the transcription of DNA into RNA using the four ribonucleoside triphosphates as substrates. The protein is DNA-directed RNA polymerase subunit beta of Pseudothermotoga lettingae (strain ATCC BAA-301 / DSM 14385 / NBRC 107922 / TMO) (Thermotoga lettingae).